Consider the following 244-residue polypeptide: Probable transcriptional regulatory protein Aasi_0624 (244 aa).

Belongs to the TACO1 family.

The protein localises to the cytoplasm. This chain is Probable transcriptional regulatory protein Aasi_0624, found in Amoebophilus asiaticus (strain 5a2).